The following is an 805-amino-acid chain: Mediator of RNA polymerase II transcription subunit 25 (805 aa).

Disordered stretches follow at residues N308–T332 and Q647–L691. Residues Q647–A678 show a composition bias toward low complexity. Residues L691–L695 carry the LXXLL motif motif.

Belongs to the Mediator complex subunit 25 family. Component of the Mediator complex.

The protein localises to the nucleus. Functionally, component of the Mediator complex, a coactivator involved in the regulated transcription of nearly all RNA polymerase II-dependent genes. Mediator functions as a bridge to convey information from gene-specific regulatory proteins to the basal RNA polymerase II transcription machinery. Mediator is recruited to promoters by direct interactions with regulatory proteins and serves as a scaffold for the assembly of a functional preinitiation complex with RNA polymerase II and the general transcription factors. In Xenopus tropicalis (Western clawed frog), this protein is Mediator of RNA polymerase II transcription subunit 25 (med25).